We begin with the raw amino-acid sequence, 459 residues long: Phosphoenolpyruvate carboxylase (459 aa).

This sequence belongs to the PEPCase type 2 family. In terms of assembly, homotetramer. It depends on Mg(2+) as a cofactor.

It carries out the reaction oxaloacetate + phosphate = phosphoenolpyruvate + hydrogencarbonate. Its function is as follows. Catalyzes the irreversible beta-carboxylation of phosphoenolpyruvate (PEP) to form oxaloacetate (OAA), a four-carbon dicarboxylic acid source for the tricarboxylic acid cycle. The chain is Phosphoenolpyruvate carboxylase from Pyrobaculum calidifontis (strain DSM 21063 / JCM 11548 / VA1).